A 20-amino-acid polypeptide reads, in one-letter code: Antimicrobial peptide EP-20 (20 aa).

Residues 1–20 (EGPVGLADPDGPASAPLGAP) are disordered.

It is found in the secreted. The synthetic peptide inhibits growth of fungus P.capsici and partially that of V.dahliae, F.graminearum and F.omysporum. This Xenorhabdus budapestensis protein is Antimicrobial peptide EP-20.